The sequence spans 156 residues: Cellulose synthase operon protein D (156 aa).

It functions in the pathway glycan metabolism; bacterial cellulose biosynthesis. May have a major role in the perfection of crystallization, involved either in the pore structure itself or in the organization of the pores within the linear array of terminal synthesizing complexes (TCs). The polypeptide is Cellulose synthase operon protein D (acsD) (Komagataeibacter xylinus (Gluconacetobacter xylinus)).